The primary structure comprises 702 residues: Polyphosphate kinase (702 aa).

N55 contacts ATP. Residues R389 and R419 each coordinate Mg(2+). The active-site Phosphohistidine intermediate is the H449. ATP is bound by residues Y482, R578, and H606.

It belongs to the polyphosphate kinase 1 (PPK1) family. Mg(2+) is required as a cofactor. Post-translationally, an intermediate of this reaction is the autophosphorylated ppk in which a phosphate is covalently linked to a histidine residue through a N-P bond.

It catalyses the reaction [phosphate](n) + ATP = [phosphate](n+1) + ADP. Catalyzes the reversible transfer of the terminal phosphate of ATP to form a long-chain polyphosphate (polyP). The polypeptide is Polyphosphate kinase (Bacillus cereus (strain ATCC 14579 / DSM 31 / CCUG 7414 / JCM 2152 / NBRC 15305 / NCIMB 9373 / NCTC 2599 / NRRL B-3711)).